The following is a 489-amino-acid chain: Blue-light-activated histidine kinase (489 aa).

One can recognise a PAS domain in the interval Ala-19–Lys-93. Cys-69 carries the post-translational modification S-4a-FMN cysteine. 2 PAC domains span residues Lys-93–Lys-147 and Tyr-232–Leu-281. Residues Asn-259 to Thr-341 form an HWE histidine kinase domain region. Residue His-288 is modified to Phosphohistidine; by autocatalysis.

In terms of processing, FMN binds covalently to cysteine after exposure to blue light and this bond is spontaneously broken in the dark.

It catalyses the reaction ATP + protein L-histidine = ADP + protein N-phospho-L-histidine.. In terms of biological role, photosensitive kinase that is involved in increased bacterial virulence upon exposure to light. Once ejected from an infected animal host, sunlight acts as an environmental signal that increases the virulence of the bacterium, preparing it for infection of the next host. This photoreceptor protein is directly related to the bacterium's survival and replication within host macrophages, as it is required for optimal replication of bacteria inside macrophages. The sequence is that of Blue-light-activated histidine kinase from Brucella abortus (strain 2308).